A 310-amino-acid polypeptide reads, in one-letter code: Antiviral protein II/III (310 aa).

The N-terminal stretch at 1-25 (MKMKVLEVVGLAISIWLMLTPPASS) is a signal peptide. 2 disulfide bridges follow: Cys-57-Cys-284 and Cys-106-Cys-123. Tyr-94 is a catalytic residue. Residues Tyr-142, Glu-197, and Arg-200 contribute to the active site.

This sequence belongs to the ribosome-inactivating protein family. Type 1 RIP subfamily. In terms of tissue distribution, PAP-II is expressed in early summer leaves (at protein level). PAP-III is expressed in late summer leaves (at protein level).

It catalyses the reaction Endohydrolysis of the N-glycosidic bond at one specific adenosine on the 28S rRNA.. Its function is as follows. Possesses antiviral potency. Inhibits viral infection of plants (tobacco mosaic virus). Inhibits protein synthesis in both prokaryotes and eukaryotes. The sequence is that of Antiviral protein II/III (PAP2) from Phytolacca americana (American pokeweed).